A 118-amino-acid chain; its full sequence is UPF0342 protein BpOF4_11360 (118 aa).

This sequence belongs to the UPF0342 family.

The polypeptide is UPF0342 protein BpOF4_11360 (Alkalihalophilus pseudofirmus (strain ATCC BAA-2126 / JCM 17055 / OF4) (Bacillus pseudofirmus)).